Reading from the N-terminus, the 108-residue chain is Heme-degrading monooxygenase HmoA (108 aa).

Residues 2-95 (FVQLRKMTVK…DYLISTEVSM (94 aa)) enclose the ABM domain. His-76 provides a ligand contact to heme.

This sequence belongs to the antibiotic biosynthesis monooxygenase family. As to quaternary structure, homodimer.

Its subcellular location is the cytoplasm. The catalysed reaction is heme b + 3 reduced [NADPH--hemoprotein reductase] + 3 O2 = biliverdin IXalpha + CO + Fe(2+) + 3 oxidized [NADPH--hemoprotein reductase] + 3 H2O + H(+). Allows bacterial pathogens to use the host heme as an iron source. Catalyzes the oxidative degradation of the heme macrocyclic porphyrin ring in the presence of a suitable electron donor such as ascorbate or NADPH--cytochrome P450 reductase, with subsequent release of free iron. The protein is Heme-degrading monooxygenase HmoA (hmoA) of Bacillus subtilis (strain 168).